The sequence spans 816 residues: Leucine--tRNA ligase (816 aa).

The short motif at 40–51 (PYPSGSGLHVGH) is the 'HIGH' region element. The short motif at 576–580 (KMSKS) is the 'KMSKS' region element. ATP is bound at residue Lys579.

It belongs to the class-I aminoacyl-tRNA synthetase family.

The protein localises to the cytoplasm. It carries out the reaction tRNA(Leu) + L-leucine + ATP = L-leucyl-tRNA(Leu) + AMP + diphosphate. This Chlorobium phaeobacteroides (strain DSM 266 / SMG 266 / 2430) protein is Leucine--tRNA ligase.